A 299-amino-acid polypeptide reads, in one-letter code: NAD kinase (299 aa).

Asp-75 acts as the Proton acceptor in catalysis. NAD(+) is bound by residues 75–76, 149–150, Arg-177, Asp-179, 190–195, Ala-214, and Gln-248; these read DG, ND, and TAYALS.

Belongs to the NAD kinase family. A divalent metal cation serves as cofactor.

The protein resides in the cytoplasm. The enzyme catalyses NAD(+) + ATP = ADP + NADP(+) + H(+). Involved in the regulation of the intracellular balance of NAD and NADP, and is a key enzyme in the biosynthesis of NADP. Catalyzes specifically the phosphorylation on 2'-hydroxyl of the adenosine moiety of NAD to yield NADP. This Burkholderia thailandensis (strain ATCC 700388 / DSM 13276 / CCUG 48851 / CIP 106301 / E264) protein is NAD kinase.